A 482-amino-acid polypeptide reads, in one-letter code: tRNA sulfurtransferase (482 aa).

A THUMP domain is found at 61–165; sequence LVIRDALTRI…DDRLLLIKGR (105 aa). ATP contacts are provided by residues 183-184, K265, G287, and Q296; that span reads LI. C344 and C456 form a disulfide bridge. In terms of domain architecture, Rhodanese spans 404-482; the sequence is FGPNDVILDI…GFANVKVYRP (79 aa). C456 functions as the Cysteine persulfide intermediate in the catalytic mechanism.

Belongs to the ThiI family.

It localises to the cytoplasm. The enzyme catalyses [ThiI sulfur-carrier protein]-S-sulfanyl-L-cysteine + a uridine in tRNA + 2 reduced [2Fe-2S]-[ferredoxin] + ATP + H(+) = [ThiI sulfur-carrier protein]-L-cysteine + a 4-thiouridine in tRNA + 2 oxidized [2Fe-2S]-[ferredoxin] + AMP + diphosphate. It catalyses the reaction [ThiS sulfur-carrier protein]-C-terminal Gly-Gly-AMP + S-sulfanyl-L-cysteinyl-[cysteine desulfurase] + AH2 = [ThiS sulfur-carrier protein]-C-terminal-Gly-aminoethanethioate + L-cysteinyl-[cysteine desulfurase] + A + AMP + 2 H(+). Its pathway is cofactor biosynthesis; thiamine diphosphate biosynthesis. Its function is as follows. Catalyzes the ATP-dependent transfer of a sulfur to tRNA to produce 4-thiouridine in position 8 of tRNAs, which functions as a near-UV photosensor. Also catalyzes the transfer of sulfur to the sulfur carrier protein ThiS, forming ThiS-thiocarboxylate. This is a step in the synthesis of thiazole, in the thiamine biosynthesis pathway. The sulfur is donated as persulfide by IscS. The protein is tRNA sulfurtransferase of Salmonella typhimurium (strain LT2 / SGSC1412 / ATCC 700720).